We begin with the raw amino-acid sequence, 509 residues long: Histidine ammonia-lyase (509 aa).

The 5-imidazolinone (Ala-Gly) cross-link spans 144–146; sequence ASG. Position 145 is a 2,3-didehydroalanine (Ser) (serine 145).

Belongs to the PAL/histidase family. In terms of processing, contains an active site 4-methylidene-imidazol-5-one (MIO), which is formed autocatalytically by cyclization and dehydration of residues Ala-Ser-Gly.

The protein localises to the cytoplasm. The enzyme catalyses L-histidine = trans-urocanate + NH4(+). It participates in amino-acid degradation; L-histidine degradation into L-glutamate; N-formimidoyl-L-glutamate from L-histidine: step 1/3. The sequence is that of Histidine ammonia-lyase from Rhodospirillum centenum (strain ATCC 51521 / SW).